We begin with the raw amino-acid sequence, 797 residues long: G-type lectin S-receptor-like serine/threonine-protein kinase SD2-2 (797 aa).

Residues 1–23 (MPCTTYLPLLLLLFLLPPPSVQS) form the signal peptide. Residues 24 to 139 (KVIIKGNQTI…DGSPVWQSFD (116 aa)) form the Bulb-type lectin domain. The Extracellular segment spans residues 24–401 (KVIIKGNQTI…KNSKGNISKS (378 aa)). Residues Asn-30, Asn-49, Asn-150, and Asn-197 are each glycosylated (N-linked (GlcNAc...) asparagine). The 37-residue stretch at 274–310 (PEDPCRVYNLCGQLGFCSSELLKPCACIRGFRPRNDA) folds into the EGF-like; atypical domain. 4 disulfides stabilise this stretch: Cys-278–Cys-290, Cys-284–Cys-298, Cys-359–Cys-381, and Cys-363–Cys-369. In terms of domain architecture, PAN spans 321–407 (CRRENGDSGE…ISKSIIILCS (87 aa)). 2 N-linked (GlcNAc...) asparagine glycosylation sites follow: Asn-366 and Asn-397. The chain crosses the membrane as a helical span at residues 402-422 (IIILCSVVGSISVLGFTLLVP). Topologically, residues 423–797 (LILLKRSRKR…SRSSFGRPSP (375 aa)) are cytoplasmic. In terms of domain architecture, Protein kinase spans 461–742 (NGFSDKVGHG…TVVKMLEGVV (282 aa)). ATP is bound by residues 467-475 (VGHGGFGAV) and Lys-490. Residues 550 to 566 (SPKLLSWETRFRIALGT) form a caM-binding region. The Proton acceptor role is filled by Asp-585. Residues 767–797 (GTSCSEGHGCSDLNTGLSSPGSRSSFGRPSP) form a disordered region. Residues 784–797 (SSPGSRSSFGRPSP) are compositionally biased toward low complexity.

Belongs to the protein kinase superfamily. Ser/Thr protein kinase family. Post-translationally, autophosphorylated. As to expression, expressed in the shoot apex and roots, specifically in lateral roots and at the root-hypocotyl transition zone.

The protein localises to the cell membrane. The catalysed reaction is L-seryl-[protein] + ATP = O-phospho-L-seryl-[protein] + ADP + H(+). The enzyme catalyses L-threonyl-[protein] + ATP = O-phospho-L-threonyl-[protein] + ADP + H(+). In terms of biological role, serine/threonine-protein kinase. In Arabidopsis thaliana (Mouse-ear cress), this protein is G-type lectin S-receptor-like serine/threonine-protein kinase SD2-2 (SD22).